The primary structure comprises 425 residues: Enolase (425 aa).

Glutamine 163 provides a ligand contact to (2R)-2-phosphoglycerate. Glutamate 205 functions as the Proton donor in the catalytic mechanism. Mg(2+) is bound by residues aspartate 242, glutamate 285, and aspartate 312. (2R)-2-phosphoglycerate-binding residues include lysine 337, arginine 366, serine 367, and lysine 388. The Proton acceptor role is filled by lysine 337.

This sequence belongs to the enolase family. Mg(2+) serves as cofactor.

It localises to the cytoplasm. The protein resides in the secreted. The protein localises to the cell surface. The enzyme catalyses (2R)-2-phosphoglycerate = phosphoenolpyruvate + H2O. Its pathway is carbohydrate degradation; glycolysis; pyruvate from D-glyceraldehyde 3-phosphate: step 4/5. Its function is as follows. Catalyzes the reversible conversion of 2-phosphoglycerate (2-PG) into phosphoenolpyruvate (PEP). It is essential for the degradation of carbohydrates via glycolysis. This is Enolase from Cereibacter sphaeroides (strain ATCC 17025 / ATH 2.4.3) (Rhodobacter sphaeroides).